A 907-amino-acid chain; its full sequence is MPSDILEPRGVPTPSHFHEDIRITPEKQFGFMKNNPMPEGGVDRSSNLPTSSWTSDSYQLSQQSSLSGALPSFIPNGRTTTNDTHWESSLFSSSLSDLFSRKLRLPRSDKLAFMSANREEEPSESLEEMEAQTIGNLLPDEDDLFAEVVGEGVHKSRANGGDDLDDCDLFSSVGGMELDGDVFSSVSQRDGKRGSNVSTVAEHPQGEILSRILFVRNVDSSIEDCELGVLFKQFGDVRALHTAGKNRGFIMVSYYDIRAAQKAARALHGRLLRGRKLDIRYSIPKENPKENSSEGALWVNNLDSSISNEELHGIFSSYGEIREVRRTMHENSQVYIEFFDVRKAKVALQGLNGLEVAGRQLKLAPTCPEGTSFWPQFASDDGEGGLPKMAFNNLSSAHMGRHFPGILASTSIDGGSIRGMHNSVGSPMNSFIERHQSLDVPIGLPPSARVISASKPVGLQEFGNPFDNSKTGIQSMPNLHPHFPDYLDNFASGSPYKSSTTFSEMVSDGQKANEGFMMSNVRGVGVDGFNGGVIGSPINQGSHRGNLNLWSNSNSQQHNQSSGMMWPNSPSRVNGVPSQRIPPVTAFSRASPLMVNMASSPVHHHIGSAPVLNSPFWDRRQAYVAESPESSGFHLGSPGSMGFPGSSPSHPMDFGSHKVFSHVGGNRMEANSKNAVLRSSRQMPHLFTGRSPMLSVSGSFDLPNERYRNLSHRRSESNSSNAEKKLYELDVDRILRGEDSRTTLMIKNIPNKYTSKMLLAAIDEYCKGTYDFLYLPIDFKNKCNVGYAFINLIEPENIVPFYKAFNGKKWEKFNSEKVASLAYGRIQGKSALIAHFQNSSLMNEDKRCRPILFHTAGPNAGDQEPFPMGSNIRSRPGKHRTNSIENYTNFSSSSDNRDEPANGNDSM.

The interval 28 to 58 is disordered; that stretch reads QFGFMKNNPMPEGGVDRSSNLPTSSWTSDSY. The segment covering 44-54 has biased composition (polar residues); that stretch reads RSSNLPTSSWT. RRM domains are found at residues 211 to 284 and 295 to 368; these read RILF…YSIP and GALW…PTCP. The disordered stretch occupies residues 856-907; the sequence is AGPNAGDQEPFPMGSNIRSRPGKHRTNSIENYTNFSSSSDNRDEPANGNDSM. The span at 883 to 894 shows a compositional bias: polar residues; the sequence is SIENYTNFSSSS.

Probable RNA-binding protein that plays a role in meiosis and vegetative growth. This is Protein MEI2-like 4 (ML4) from Arabidopsis thaliana (Mouse-ear cress).